Here is a 339-residue protein sequence, read N- to C-terminus: Bifunctional NMN adenylyltransferase/Nudix hydrolase (339 aa).

An NMN adenylyltransferase region spans residues 1-183 (MQTKYQYGIY…RYIALCDEYQ (183 aa)). The region spanning 199 to 335 (PTFITTDAVV…EDHFQIIQHF (137 aa)) is the Nudix hydrolase domain. A Nudix box motif is present at residues 233-254 (GFIKQNETLVEGMLRELKEETR).

It in the N-terminal section; belongs to the archaeal NMN adenylyltransferase family. Mg(2+) serves as cofactor. Requires Mn(2+) as cofactor.

The protein resides in the cytoplasm. It catalyses the reaction beta-nicotinamide D-ribonucleotide + ATP + H(+) = diphosphate + NAD(+). It participates in cofactor biosynthesis; NAD(+) biosynthesis; NAD(+) from nicotinamide D-ribonucleotide: step 1/1. The Nudix hydrolase domain is active on ADP-ribose, (2')-phospho-ADP-ribose, IDP-ribose and NADPH. This is Bifunctional NMN adenylyltransferase/Nudix hydrolase from Synechocystis sp. (strain ATCC 27184 / PCC 6803 / Kazusa).